A 353-amino-acid polypeptide reads, in one-letter code: tRNA-specific 2-thiouridylase MnmA 2 (353 aa).

Residues 9–16 (AMSGGVDS) and Met35 contribute to the ATP site. Residue Cys98 is the Nucleophile of the active site. Cysteines 98 and 194 form a disulfide. Residue Gly122 coordinates ATP. The tract at residues 144–146 (KDQ) is interaction with tRNA. Cys194 functions as the Cysteine persulfide intermediate in the catalytic mechanism. Residues 300 to 301 (RY) are interaction with tRNA.

Belongs to the MnmA/TRMU family.

Its subcellular location is the cytoplasm. The catalysed reaction is S-sulfanyl-L-cysteinyl-[protein] + uridine(34) in tRNA + AH2 + ATP = 2-thiouridine(34) in tRNA + L-cysteinyl-[protein] + A + AMP + diphosphate + H(+). In terms of biological role, catalyzes the 2-thiolation of uridine at the wobble position (U34) of tRNA, leading to the formation of s(2)U34. This chain is tRNA-specific 2-thiouridylase MnmA 2, found in Clostridium botulinum (strain ATCC 19397 / Type A).